A 701-amino-acid polypeptide reads, in one-letter code: DNA ligase (701 aa).

The disordered stretch occupies residues 1–21 (MSAKSTPDAGPQEQATEAEAE). NAD(+)-binding positions include 50–54 (DADFD), 100–101 (SL), and Glu130. Lys132 (N6-AMP-lysine intermediate) is an active-site residue. NAD(+) is bound by residues Arg153, Glu193, Lys309, and Lys333. Zn(2+) is bound by residues Cys427, Cys430, Cys446, and Cys452. One can recognise a BRCT domain in the interval 616–701 (SIARTLEGLS…LENGPQAPEG (86 aa)).

The protein belongs to the NAD-dependent DNA ligase family. LigA subfamily. It depends on Mg(2+) as a cofactor. Mn(2+) is required as a cofactor.

It catalyses the reaction NAD(+) + (deoxyribonucleotide)n-3'-hydroxyl + 5'-phospho-(deoxyribonucleotide)m = (deoxyribonucleotide)n+m + AMP + beta-nicotinamide D-nucleotide.. Functionally, DNA ligase that catalyzes the formation of phosphodiester linkages between 5'-phosphoryl and 3'-hydroxyl groups in double-stranded DNA using NAD as a coenzyme and as the energy source for the reaction. It is essential for DNA replication and repair of damaged DNA. The chain is DNA ligase from Mycobacterium sp. (strain KMS).